Reading from the N-terminus, the 483-residue chain is Keratin, type II cytoskeletal 8 (483 aa).

Polar residues predominate over residues 1-16 (MSIRVTQKSYKVSTSG). The interval 1-41 (MSIRVTQKSYKVSTSGPRAFSSRSYTSGPGSRISSSSFSRV) is disordered. Positions 1-90 (MSIRVTQKSY…DPNIQAVRTQ (90 aa)) are head. Phosphoserine; by PKC/PRKCE is present on serine 9. Lysine 11 participates in a covalent cross-link: Glycyl lysine isopeptide (Lys-Gly) (interchain with G-Cter in SUMO2). Phosphoserine occurs at positions 13, 15, 21, and 22. At arginine 23 the chain carries Omega-N-methylarginine. Serine 24 bears the Phosphoserine; by PKC/PRKCE mark. Over residues 24-41 (SYTSGPGSRISSSSFSRV) the composition is skewed to low complexity. Threonine 26 bears the Phosphothreonine mark. Phosphoserine occurs at positions 27 and 31. At arginine 32 the chain carries Omega-N-methylarginine. A phosphoserine mark is found at serine 34, serine 37, and serine 39. Position 40 is an omega-N-methylarginine (arginine 40). 2 positions are modified to phosphoserine: serine 43 and serine 44. Arginine 47 is subject to Asymmetric dimethylarginine; alternate. Position 47 is an omega-N-methylarginine; alternate (arginine 47). At serine 74 the chain carries Phosphoserine; by MAPK. The interval 91–126 (EKEQIKTLNNKFASFIDKVRFLEQQNKMLETKWSLL) is coil 1A. One can recognise an IF rod domain in the interval 91–402 (EKEQIKTLNN…KLLEGEESRL (312 aa)). Lysine 101 is subject to N6-malonyllysine. Glycyl lysine isopeptide (Lys-Gly) (interchain with G-Cter in SUMO2) cross-links involve residues lysine 122 and lysine 130. The tract at residues 127-143 (QQQKTARSNMDNMFESY) is linker 1. Residues 144 to 235 (INNLRRQLET…QLYEEEIREL (92 aa)) are coil 1B. Residue lysine 197 forms a Glycyl lysine isopeptide (Lys-Gly) (interchain with G-Cter in SUMO1); alternate linkage. Residue lysine 197 forms a Glycyl lysine isopeptide (Lys-Gly) (interchain with G-Cter in SUMO2); alternate linkage. Residue lysine 207 is modified to N6-acetyllysine. At tyrosine 228 the chain carries Phosphotyrosine. The segment at 236–259 (QSQISDTSVVLSMDNSRSLDMDSI) is linker 12. Phosphoserine is present on residues serine 253 and serine 258. A coil 2 region spans residues 260–398 (IAEVKAQYED…ATYRKLLEGE (139 aa)). The segment at 261-382 (AEVKAQYEDI…EYQELMNVKL (122 aa)) is necessary for interaction with PNN. A Glycyl lysine isopeptide (Lys-Gly) (interchain with G-Cter in SUMO2) cross-link involves residue lysine 264. Serine 274 is subject to Phosphoserine. Lysine 285 is covalently cross-linked (Glycyl lysine isopeptide (Lys-Gly) (interchain with G-Cter in SUMO2)). The residue at position 291 (serine 291) is a Phosphoserine. Lysine 295 participates in a covalent cross-link: Glycyl lysine isopeptide (Lys-Gly) (interchain with G-Cter in SUMO2); alternate. At lysine 295 the chain carries N6-acetyllysine; alternate. A Glycyl lysine isopeptide (Lys-Gly) (interchain with G-Cter in SUMO2) cross-link involves residue lysine 304. Lysine 325 participates in a covalent cross-link: Glycyl lysine isopeptide (Lys-Gly) (interchain with G-Cter in SUMO2); alternate. Lysine 325 carries the N6-acetyllysine; alternate modification. Serine 330 is modified (phosphoserine). Residue lysine 393 forms a Glycyl lysine isopeptide (Lys-Gly) (interchain with G-Cter in SUMO2) linkage. The tail stretch occupies residues 399–483 (ESRLESGMQN…VSESSDVLPK (85 aa)). Serine 400, serine 404, serine 410, serine 417, and serine 424 each carry phosphoserine. At serine 432 the chain carries Phosphoserine; by CaMK2 and MAPK. Lysine 472 participates in a covalent cross-link: Glycyl lysine isopeptide (Lys-Gly) (interchain with G-Cter in SUMO1); alternate. A Glycyl lysine isopeptide (Lys-Gly) (interchain with G-Cter in SUMO2); alternate cross-link involves residue lysine 472. A phosphoserine mark is found at serine 475, serine 477, and serine 478.

Belongs to the intermediate filament family. As to quaternary structure, heterotetramer of two type I and two type II keratins. Forms a heterodimer with KRT18. Associates with KRT20. Interacts with PLEC isoform 1C, when in a heterodimer with KRT18. Interacts with PNN. When associated with KRT19, interacts with DMD. Interacts with TCHP. Interacts with APEX1. Interacts with GPER1. Interacts with EPPK1. Interacts with PKP1 and PKP2. (Microbial infection) Interacts with hepatitis C virus/HCV core protein. Post-translationally, phosphorylation on serine residues is enhanced during EGF stimulation and mitosis. Ser-74 phosphorylation plays an important role in keratin filament reorganization. In terms of processing, O-glycosylated. O-GlcNAcylation at multiple sites increases solubility, and decreases stability by inducing proteasomal degradation. O-glycosylated (O-GlcNAcylated), in a cell cycle-dependent manner. Observed in muscle fibers accumulating in the costameres of myoplasm at the sarcolemma membrane in structures that contain dystrophin and spectrin. Expressed in gingival mucosa and hard palate of the oral cavity.

It localises to the cytoplasm. It is found in the nucleus. The protein resides in the nucleoplasm. The protein localises to the nucleus matrix. Together with KRT19, helps to link the contractile apparatus to dystrophin at the costameres of striated muscle. The protein is Keratin, type II cytoskeletal 8 (KRT8) of Homo sapiens (Human).